Here is a 132-residue protein sequence, read N- to C-terminus: Aspartate 1-decarboxylase (132 aa).

S25 acts as the Schiff-base intermediate with substrate; via pyruvic acid in catalysis. S25 is modified (pyruvic acid (Ser)). Substrate is bound at residue T57. Y58 acts as the Proton donor in catalysis. Residue 73 to 75 (GAA) coordinates substrate.

Belongs to the PanD family. In terms of assembly, heterooctamer of four alpha and four beta subunits. Pyruvate serves as cofactor. Post-translationally, is synthesized initially as an inactive proenzyme, which is activated by self-cleavage at a specific serine bond to produce a beta-subunit with a hydroxyl group at its C-terminus and an alpha-subunit with a pyruvoyl group at its N-terminus.

The protein resides in the cytoplasm. The enzyme catalyses L-aspartate + H(+) = beta-alanine + CO2. It functions in the pathway cofactor biosynthesis; (R)-pantothenate biosynthesis; beta-alanine from L-aspartate: step 1/1. Catalyzes the pyruvoyl-dependent decarboxylation of aspartate to produce beta-alanine. The sequence is that of Aspartate 1-decarboxylase from Geotalea uraniireducens (strain Rf4) (Geobacter uraniireducens).